A 342-amino-acid chain; its full sequence is Dihydroorotase (342 aa).

The Zn(2+) site is built by His-13 and His-15. Substrate-binding positions include 15–17 (HLR) and Asn-41. The Zn(2+) site is built by Lys-98, His-135, and His-173. The residue at position 98 (Lys-98) is an N6-carboxylysine. Residue His-135 coordinates substrate. Residue Leu-218 coordinates substrate. Residue Asp-246 coordinates Zn(2+). The active site involves Asp-246. Residues His-250 and Ala-262 each contribute to the substrate site.

This sequence belongs to the metallo-dependent hydrolases superfamily. DHOase family. Class II DHOase subfamily. In terms of assembly, homodimer. Zn(2+) serves as cofactor.

The catalysed reaction is (S)-dihydroorotate + H2O = N-carbamoyl-L-aspartate + H(+). It participates in pyrimidine metabolism; UMP biosynthesis via de novo pathway; (S)-dihydroorotate from bicarbonate: step 3/3. Its function is as follows. Catalyzes the reversible cyclization of carbamoyl aspartate to dihydroorotate. The chain is Dihydroorotase from Vibrio atlanticus (strain LGP32) (Vibrio splendidus (strain Mel32)).